Consider the following 233-residue polypeptide: Hydroxyacylglutathione hydrolase (233 aa).

Positions 52, 54, 56, 57, 108, 125, and 163 each coordinate Zn(2+).

It belongs to the metallo-beta-lactamase superfamily. Glyoxalase II family. In terms of assembly, monomer. Requires Zn(2+) as cofactor.

It carries out the reaction an S-(2-hydroxyacyl)glutathione + H2O = a 2-hydroxy carboxylate + glutathione + H(+). The protein operates within secondary metabolite metabolism; methylglyoxal degradation; (R)-lactate from methylglyoxal: step 2/2. Functionally, thiolesterase that catalyzes the hydrolysis of S-D-lactoyl-glutathione to form glutathione and D-lactic acid. This chain is Hydroxyacylglutathione hydrolase, found in Pasteurella multocida (strain Pm70).